Reading from the N-terminus, the 343-residue chain is Selenide, water dikinase (343 aa).

Sec13 is an active-site residue. Residue Sec13 is a non-standard amino acid, selenocysteine. Residues Lys16 and 44-46 each bind ATP; that span reads TAD. Asp47 lines the Mg(2+) pocket. ATP contacts are provided by residues Asp64, Asp87, and 135-137; that span reads GHT. Mg(2+) is bound at residue Asp87. Asp223 is a binding site for Mg(2+).

This sequence belongs to the selenophosphate synthase 1 family. Class I subfamily. As to quaternary structure, homodimer. Mg(2+) serves as cofactor.

It carries out the reaction hydrogenselenide + ATP + H2O = selenophosphate + AMP + phosphate + 2 H(+). Its function is as follows. Synthesizes selenophosphate from selenide and ATP. The protein is Selenide, water dikinase of Geobacter metallireducens (strain ATCC 53774 / DSM 7210 / GS-15).